Consider the following 288-residue polypeptide: Light-independent protochlorophyllide reductase iron-sulfur ATP-binding protein (288 aa).

ATP contacts are provided by residues glycine 10–threonine 15 and lysine 39. A Mg(2+)-binding site is contributed by serine 14. [4Fe-4S] cluster-binding residues include cysteine 95 and cysteine 129. Residue asparagine 180–arginine 181 coordinates ATP.

The protein belongs to the NifH/BchL/ChlL family. Homodimer. Protochlorophyllide reductase is composed of three subunits; ChlL, ChlN and ChlB. [4Fe-4S] cluster serves as cofactor.

The enzyme catalyses chlorophyllide a + oxidized 2[4Fe-4S]-[ferredoxin] + 2 ADP + 2 phosphate = protochlorophyllide a + reduced 2[4Fe-4S]-[ferredoxin] + 2 ATP + 2 H2O. The protein operates within porphyrin-containing compound metabolism; chlorophyll biosynthesis (light-independent). Its function is as follows. Component of the dark-operative protochlorophyllide reductase (DPOR) that uses Mg-ATP and reduced ferredoxin to reduce ring D of protochlorophyllide (Pchlide) to form chlorophyllide a (Chlide). This reaction is light-independent. The L component serves as a unique electron donor to the NB-component of the complex, and binds Mg-ATP. The polypeptide is Light-independent protochlorophyllide reductase iron-sulfur ATP-binding protein (Nostoc punctiforme (strain ATCC 29133 / PCC 73102)).